Here is a 283-residue protein sequence, read N- to C-terminus: 3-methyl-2-oxobutanoate hydroxymethyltransferase (283 aa).

Mg(2+) contacts are provided by Asp46 and Asp85. 3-methyl-2-oxobutanoate-binding positions include 46–47 (DS), Asp85, and Lys115. Mg(2+) is bound at residue Glu117. The Proton acceptor role is filled by Glu184.

This sequence belongs to the PanB family. As to quaternary structure, homodecamer; pentamer of dimers. Mg(2+) serves as cofactor.

Its subcellular location is the cytoplasm. It carries out the reaction 3-methyl-2-oxobutanoate + (6R)-5,10-methylene-5,6,7,8-tetrahydrofolate + H2O = 2-dehydropantoate + (6S)-5,6,7,8-tetrahydrofolate. Its pathway is cofactor biosynthesis; (R)-pantothenate biosynthesis; (R)-pantoate from 3-methyl-2-oxobutanoate: step 1/2. In terms of biological role, catalyzes the reversible reaction in which hydroxymethyl group from 5,10-methylenetetrahydrofolate is transferred onto alpha-ketoisovalerate to form ketopantoate. This is 3-methyl-2-oxobutanoate hydroxymethyltransferase from Acetivibrio thermocellus (strain ATCC 27405 / DSM 1237 / JCM 9322 / NBRC 103400 / NCIMB 10682 / NRRL B-4536 / VPI 7372) (Clostridium thermocellum).